Here is a 132-residue protein sequence, read N- to C-terminus: MNQLPIMAKQAAEIASNAQELSNKLKDLVIDASWQTNTNTIDPLVFAITIFVLASFVGYYVVWKVTPALHTPLMSITNAISGIIVISSMIAITSSSAFEFSSLLGSFATLLASINIFGGFIVTTRMLEMFKK.

3 helical membrane passes run 43–63 (PLVF…YVVW), 72–92 (PLMS…MIAI), and 103–123 (LLGS…FIVT).

In terms of assembly, complex of an alpha and a beta chain; in Rickettsia, the alpha chain seems to be made of two subunits.

The protein resides in the cell inner membrane. The enzyme catalyses NAD(+) + NADPH + H(+)(in) = NADH + NADP(+) + H(+)(out). Functionally, the transhydrogenation between NADH and NADP is coupled to respiration and ATP hydrolysis and functions as a proton pump across the membrane. In Rickettsia prowazekii (strain Madrid E), this protein is NAD(P) transhydrogenase subunit alpha part 2 (pntAB).